A 638-amino-acid chain; its full sequence is Pentatricopeptide repeat-containing protein At1g59720, chloroplastic/mitochondrial (638 aa).

The transit peptide at Met1–Ser40 directs the protein to the chloroplast and mitochondrion. PPR repeat units lie at residues Thr82–His112, Ser113–Ser148, Asp150–Gly184, Asp185–Arg215, Ser216–Ser246, Asp250–Lys280, Asp288–Arg318, Asp319–Val353, Asn356–Glu390, and Ala392–Lys422. The interval Ile427–Asn510 is type E motif. Positions Gly511 to Arg541 are type E(+) motif. The type DYW motif stretch occupies residues Ser542–Trp638.

This sequence belongs to the PPR family. PCMP-H subfamily. Interacts with ORRM1. Interacts with VAR3/OZ1.

Its subcellular location is the plastid. The protein localises to the chloroplast. The protein resides in the mitochondrion. Involved in multiple sites RNA editing events in chloroplasts. Involved in the editing of the site 2 of ndhB (ndhB-2) and site 3 of ndhD (ndhD-3) transcripts, which are two plastid-encoded subunits of the chloroplast NAD(P)H dehydrogenase (NDH) complex. Required for the activity of the NDH complex of the photosynthetic electron transport chain. This Arabidopsis thaliana (Mouse-ear cress) protein is Pentatricopeptide repeat-containing protein At1g59720, chloroplastic/mitochondrial (PCMP-H51).